The primary structure comprises 342 residues: MTSDETLAVLIRYLDNPNPTVEEAVEVFTPMTIGEYDDVHIAALLATIRTRGETFADIAGAAKAFLNAGRPFPVPGTGVLDTAGTGGDGANTINITTGASLVAAAGGLKVVKHGNRSVSSKSGSADVLEALNIPLDLDPERAQRWFEASNFTFLFAPAYNPAIAHAQPVRKALKVPTIFNVLGPLLSPVRPEFQIMGVANPRHGQMLTEVFRELGRTRALVVHGAGTDEIAVHGTTQVWELKADGEIISYEITPEELGVERCDLTDLVGGDGVENARHMRAIFDGTGPAAHRNAVAVNAGAMFYLNSQADSLREGTAHALSLINDGTVADWLKTHEEIDYRG.

5-phospho-alpha-D-ribose 1-diphosphate is bound by residues G84, 87 to 88 (GD), T92, 94 to 97 (NITT), 112 to 120 (KHGNRSVSS), and S124. Residue G84 participates in anthranilate binding. A Mg(2+)-binding site is contributed by T96. Residue N115 coordinates anthranilate. Residue R170 participates in anthranilate binding. 2 residues coordinate Mg(2+): D228 and E229.

This sequence belongs to the anthranilate phosphoribosyltransferase family. In terms of assembly, homodimer. Requires Mg(2+) as cofactor.

It catalyses the reaction N-(5-phospho-beta-D-ribosyl)anthranilate + diphosphate = 5-phospho-alpha-D-ribose 1-diphosphate + anthranilate. It functions in the pathway amino-acid biosynthesis; L-tryptophan biosynthesis; L-tryptophan from chorismate: step 2/5. Functionally, catalyzes the transfer of the phosphoribosyl group of 5-phosphorylribose-1-pyrophosphate (PRPP) to anthranilate to yield N-(5'-phosphoribosyl)-anthranilate (PRA). This Corynebacterium efficiens (strain DSM 44549 / YS-314 / AJ 12310 / JCM 11189 / NBRC 100395) protein is Anthranilate phosphoribosyltransferase.